Consider the following 327-residue polypeptide: tRNA pseudouridine synthase B (327 aa).

The active-site Nucleophile is the D83.

This sequence belongs to the pseudouridine synthase TruB family. Type 1 subfamily.

The enzyme catalyses uridine(55) in tRNA = pseudouridine(55) in tRNA. In terms of biological role, responsible for synthesis of pseudouridine from uracil-55 in the psi GC loop of transfer RNAs. The protein is tRNA pseudouridine synthase B of Mesomycoplasma hyopneumoniae (strain 232) (Mycoplasma hyopneumoniae).